Reading from the N-terminus, the 185-residue chain is MSEEKKDEILEQETVETKEEIKTEEAEQKTESLEEKVARLESELKESEEKFLRAYADFENMKKRLEKEKYQAIDYASEKFAKDLLTPLDTLEMALNSAKADVDANELLEKLKEGIELTLKNFITTFEKHNITKVETDGEFDPNVHNAVMQVDSAEHNSGQIVQELQKGYVLKDRLLRPSMVSIAN.

Residues 1-40 (MSEEKKDEILEQETVETKEEIKTEEAEQKTESLEEKVARL) are disordered.

It belongs to the GrpE family. As to quaternary structure, homodimer.

It localises to the cytoplasm. Its function is as follows. Participates actively in the response to hyperosmotic and heat shock by preventing the aggregation of stress-denatured proteins, in association with DnaK and GrpE. It is the nucleotide exchange factor for DnaK and may function as a thermosensor. Unfolded proteins bind initially to DnaJ; upon interaction with the DnaJ-bound protein, DnaK hydrolyzes its bound ATP, resulting in the formation of a stable complex. GrpE releases ADP from DnaK; ATP binding to DnaK triggers the release of the substrate protein, thus completing the reaction cycle. Several rounds of ATP-dependent interactions between DnaJ, DnaK and GrpE are required for fully efficient folding. This Aliarcobacter butzleri (strain RM4018) (Arcobacter butzleri) protein is Protein GrpE.